Reading from the N-terminus, the 504-residue chain is MFGEKFRDRQKPMVLVLGLGESGLAMARWCARHGCRLRIADTREVPPNLSALEAHGIEGNFVGGPFSEVLLEGVELVAISPGLSPLAADLVPLIATARERGIPVWGELEFFAQALKTLGESGYAPKVIAITGTNGKTTTTSLTGLLCERAGKKVAVAGNISPAALDKLTEAIDNTALPDVWVLELSSFQLETAHTFEPDAAVILNITQDHLDWHGGLDAYAAAKGKIFGKNTVRVLNRDDARVMTLASSEQSGAQLVTFGVNEPVRDGDYGLLRDNGMIWLVQAQDRDATDEPAPTRRRKSESTAPPDIGLKRLMPADALRIRGLHNATNALAAFALARAIGLPGAPLLHGLREYRGEPHRVELIASIEGVDYVDDSKGTNVGATVAALDGLAQRVVLIAGGDGKGQAFDPLAEPVTRWCRCVMLIGRDAPQIRAALEHTGIAITDHATLEEATRAASAVAQPGDAVLLSPACASFDMFKGYAHRAAVFRSTVEDIAAGRGTMI.

132 to 138 (GTNGKTT) is a binding site for ATP. Residues 284–310 (AQDRDATDEPAPTRRRKSESTAPPDIG) are disordered.

This sequence belongs to the MurCDEF family.

Its subcellular location is the cytoplasm. The enzyme catalyses UDP-N-acetyl-alpha-D-muramoyl-L-alanine + D-glutamate + ATP = UDP-N-acetyl-alpha-D-muramoyl-L-alanyl-D-glutamate + ADP + phosphate + H(+). It participates in cell wall biogenesis; peptidoglycan biosynthesis. In terms of biological role, cell wall formation. Catalyzes the addition of glutamate to the nucleotide precursor UDP-N-acetylmuramoyl-L-alanine (UMA). This chain is UDP-N-acetylmuramoylalanine--D-glutamate ligase, found in Paraburkholderia phymatum (strain DSM 17167 / CIP 108236 / LMG 21445 / STM815) (Burkholderia phymatum).